We begin with the raw amino-acid sequence, 540 residues long: Phosphoenolpyruvate carboxykinase (ATP) (540 aa).

R65 lines the substrate pocket. Position 87 is an N6-acetyllysine (K87). Substrate-binding residues include Y207 and K213. Residues K213, H232, and 248-256 (GLSGTGKTT) each bind ATP. Positions 213 and 232 each coordinate Mn(2+). D269 provides a ligand contact to Mn(2+). Residues E297, R333, 449–450 (RI), and T455 each bind ATP. R333 provides a ligand contact to substrate. K523 bears the N6-acetyllysine mark.

Belongs to the phosphoenolpyruvate carboxykinase (ATP) family. In terms of assembly, monomer. It depends on Mn(2+) as a cofactor.

The protein localises to the cytoplasm. The enzyme catalyses oxaloacetate + ATP = phosphoenolpyruvate + ADP + CO2. It functions in the pathway carbohydrate biosynthesis; gluconeogenesis. In terms of biological role, involved in the gluconeogenesis. Catalyzes the conversion of oxaloacetate (OAA) to phosphoenolpyruvate (PEP) through direct phosphoryl transfer between the nucleoside triphosphate and OAA. The sequence is that of Phosphoenolpyruvate carboxykinase (ATP) from Escherichia coli O7:K1 (strain IAI39 / ExPEC).